A 593-amino-acid chain; its full sequence is Proline--tRNA ligase (593 aa).

Belongs to the class-II aminoacyl-tRNA synthetase family. ProS type 1 subfamily. In terms of assembly, homodimer.

It localises to the cytoplasm. It carries out the reaction tRNA(Pro) + L-proline + ATP = L-prolyl-tRNA(Pro) + AMP + diphosphate. Catalyzes the attachment of proline to tRNA(Pro) in a two-step reaction: proline is first activated by ATP to form Pro-AMP and then transferred to the acceptor end of tRNA(Pro). As ProRS can inadvertently accommodate and process non-cognate amino acids such as alanine and cysteine, to avoid such errors it has two additional distinct editing activities against alanine. One activity is designated as 'pretransfer' editing and involves the tRNA(Pro)-independent hydrolysis of activated Ala-AMP. The other activity is designated 'posttransfer' editing and involves deacylation of mischarged Ala-tRNA(Pro). The misacylated Cys-tRNA(Pro) is not edited by ProRS. The sequence is that of Proline--tRNA ligase from Synechococcus sp. (strain CC9902).